The sequence spans 274 residues: Thiamine kinase (274 aa).

This sequence belongs to the thiamine kinase family.

It catalyses the reaction thiamine + ATP = thiamine phosphate + ADP + H(+). Its pathway is cofactor biosynthesis; thiamine diphosphate biosynthesis; thiamine phosphate from thiamine: step 1/1. Its function is as follows. Catalyzes the ATP-dependent phosphorylation of thiamine to thiamine phosphate. Is involved in thiamine salvage. This chain is Thiamine kinase, found in Shigella boydii serotype 4 (strain Sb227).